We begin with the raw amino-acid sequence, 267 residues long: Undecaprenyl-diphosphatase (267 aa).

Helical transmembrane passes span Met-1–Val-21, Val-49–Gly-69, Ala-83–Leu-103, Ala-111–Trp-131, Met-190–Ala-210, Asp-219–Met-239, and Val-245–Ala-265.

Belongs to the UppP family.

The protein resides in the cell inner membrane. It carries out the reaction di-trans,octa-cis-undecaprenyl diphosphate + H2O = di-trans,octa-cis-undecaprenyl phosphate + phosphate + H(+). In terms of biological role, catalyzes the dephosphorylation of undecaprenyl diphosphate (UPP). Confers resistance to bacitracin. This Dinoroseobacter shibae (strain DSM 16493 / NCIMB 14021 / DFL 12) protein is Undecaprenyl-diphosphatase.